Consider the following 269-residue polypeptide: Eukaryotic translation initiation factor 3 subunit G-2 (269 aa).

Residues 189–267 (SAVRISNLSE…LILCVEWSKP (79 aa)) form the RRM domain.

Belongs to the eIF-3 subunit G family. In terms of assembly, component of the eukaryotic translation initiation factor 3 (eIF-3) complex. The eIF-3 complex interacts with pix.

The protein resides in the cytoplasm. Functionally, RNA-binding component of the eukaryotic translation initiation factor 3 (eIF-3) complex, which is involved in protein synthesis of a specialized repertoire of mRNAs and, together with other initiation factors, stimulates binding of mRNA and methionyl-tRNAi to the 40S ribosome. The eIF-3 complex specifically targets and initiates translation of a subset of mRNAs involved in cell proliferation. This subunit can bind 18S rRNA. This Drosophila ananassae (Fruit fly) protein is Eukaryotic translation initiation factor 3 subunit G-2.